A 479-amino-acid chain; its full sequence is Ribosomal RNA small subunit methyltransferase F (479 aa).

Residues 125-131 (AAAPGSK), Glu149, Asp176, and Asp194 each bind S-adenosyl-L-methionine. The active-site Nucleophile is Cys247.

This sequence belongs to the class I-like SAM-binding methyltransferase superfamily. RsmB/NOP family.

The protein resides in the cytoplasm. The enzyme catalyses cytidine(1407) in 16S rRNA + S-adenosyl-L-methionine = 5-methylcytidine(1407) in 16S rRNA + S-adenosyl-L-homocysteine + H(+). Its function is as follows. Specifically methylates the cytosine at position 1407 (m5C1407) of 16S rRNA. The sequence is that of Ribosomal RNA small subunit methyltransferase F from Citrobacter koseri (strain ATCC BAA-895 / CDC 4225-83 / SGSC4696).